A 215-amino-acid polypeptide reads, in one-letter code: Cytokinin riboside 5'-monophosphate phosphoribohydrolase LOG4 (215 aa).

Residues Glu-84, 102-103 (RK), 119-125 (GYGTLEE), and Thr-131 contribute to the substrate site.

This sequence belongs to the LOG family. As to expression, expressed in roots and shoots. Detected in root procambium, lateral root primordia, vascular tissues of cotyledons, leaves and stems, shoot apical meristem, axillary buds, young inflorescences, fruit abscission zones and basal part of ovules.

It localises to the cytoplasm. The protein localises to the nucleus. The enzyme catalyses N(6)-(dimethylallyl)adenosine 5'-phosphate + H2O = N(6)-dimethylallyladenine + D-ribose 5-phosphate. It carries out the reaction 9-ribosyl-trans-zeatin 5'-phosphate + H2O = trans-zeatin + D-ribose 5-phosphate. Its function is as follows. Cytokinin-activating enzyme working in the direct activation pathway. Phosphoribohydrolase that converts inactive cytokinin nucleotides to the biologically active free-base forms. The protein is Cytokinin riboside 5'-monophosphate phosphoribohydrolase LOG4 (LOG4) of Arabidopsis thaliana (Mouse-ear cress).